A 619-amino-acid polypeptide reads, in one-letter code: MALLQIAEPGQSPKPHERRLAVGIDLGTTNSLVAAVRSGVAEPLPDAQGRLILPSAVRYHAERAEVGESARAAAAEDPFNTVISVKRLMGRGLEDVKQLGEQLPYRFRQGESHMPFIETVQGLKSPVEVSADILRELRQRAETTLGGELVGAVITVPAYFDDAQRQATKDAARLAGLNVLRLLNEPTAAAVAYGLDKGAEGLVAIYDLGGGTFDISILRLTRGVFEVLATGGDTALGGDDFDHAIAGWVIEEAGLSADLDPGSQRQLLQIACAAKERLTDEASVRVAYGDWSGELSRATLDELIEPFVARSLKSCRRAVRDSGVDLEEIRSVVMVGGSTRVPRVRTAVGELFGCEPLTDIDPDQVVAIGAAIQADALAGNKRGEELLLLDVIPLSLGLETMGGLMEKVIPRNTTIPVARAQEFTTYKDGQTAMMIHVLQGERELVKDCRSLARFELRGIPPMVAGAAKIRVTFQVDADGLLGVSARELSSGVEASIQVKPSYGLTDGEIARMLKDSFDYAGDDKAARALREQQVEAQRLLEAVQSALDVDGERLLDEEERLAIAAQMDTLRELAGGSDTAAIENQIKRLSQVTDAFAARRMDATVKAALSGRRLNEIEE.

Belongs to the heat shock protein 70 family.

Its function is as follows. Chaperone involved in the maturation of iron-sulfur cluster-containing proteins. Has a low intrinsic ATPase activity which is markedly stimulated by HscB. This chain is Chaperone protein HscA homolog, found in Pseudomonas aeruginosa (strain LESB58).